Here is a 250-residue protein sequence, read N- to C-terminus: 3-deoxy-manno-octulosonate cytidylyltransferase (250 aa).

The protein belongs to the KdsB family.

It is found in the cytoplasm. It catalyses the reaction 3-deoxy-alpha-D-manno-oct-2-ulosonate + CTP = CMP-3-deoxy-beta-D-manno-octulosonate + diphosphate. The protein operates within nucleotide-sugar biosynthesis; CMP-3-deoxy-D-manno-octulosonate biosynthesis; CMP-3-deoxy-D-manno-octulosonate from 3-deoxy-D-manno-octulosonate and CTP: step 1/1. It participates in bacterial outer membrane biogenesis; lipopolysaccharide biosynthesis. Functionally, activates KDO (a required 8-carbon sugar) for incorporation into bacterial lipopolysaccharide in Gram-negative bacteria. The polypeptide is 3-deoxy-manno-octulosonate cytidylyltransferase (Xanthomonas campestris pv. campestris (strain 8004)).